The sequence spans 432 residues: Glutamate-1-semialdehyde 2,1-aminomutase (432 aa).

Lys-265 carries the N6-(pyridoxal phosphate)lysine modification.

It belongs to the class-III pyridoxal-phosphate-dependent aminotransferase family. HemL subfamily. Homodimer. The cofactor is pyridoxal 5'-phosphate.

The protein localises to the cytoplasm. The enzyme catalyses (S)-4-amino-5-oxopentanoate = 5-aminolevulinate. Its pathway is porphyrin-containing compound metabolism; protoporphyrin-IX biosynthesis; 5-aminolevulinate from L-glutamyl-tRNA(Glu): step 2/2. This is Glutamate-1-semialdehyde 2,1-aminomutase from Histophilus somni (strain 2336) (Haemophilus somnus).